We begin with the raw amino-acid sequence, 890 residues long: Tyrosine-protein kinase receptor TYRO3 (890 aa).

A signal peptide spans 1–40 (MALRRSMGRPGLPPLPLPPPPRLGLLLAALASLLLPESAA). 2 Ig-like C2-type domains span residues 41–128 (AGLK…TEIS) and 139–220 (PFFT…ATVH). The Extracellular portion of the chain corresponds to 41–429 (AGLKLMGAPV…QGPPHSRTSW (389 aa)). N-linked (GlcNAc...) asparagine glycosylation occurs at asparagine 63. Cystine bridges form between cysteine 64–cysteine 117 and cysteine 160–cysteine 203. N-linked (GlcNAc...) asparagine glycosylation is found at asparagine 191, asparagine 230, asparagine 240, asparagine 293, asparagine 366, and asparagine 380. Fibronectin type-III domains follow at residues 227–320 (APFN…TKGL) and 325–416 (APQN…SHDR). The chain crosses the membrane as a helical span at residues 430–450 (VPVVLGVLTALVTAAALALIL). Residues 451–890 (LRKRRKETRF…QQGLLPHSSC (440 aa)) are Cytoplasmic-facing. Serine 466 carries the post-translational modification Phosphoserine. Residues 518-790 (FTLGRMLGKG…CLRMELENIL (273 aa)) form the Protein kinase domain. Residues 524–532 (LGKGEFGSV) and lysine 550 contribute to the ATP site. Residue aspartate 655 is the Proton acceptor of the active site. Phosphotyrosine; by autocatalysis is present on residues tyrosine 681, tyrosine 685, tyrosine 686, and tyrosine 804. Disordered stretches follow at residues 815–837 (AGGS…GSGM) and 851–871 (LTPG…ESPL). Serine 818 and serine 869 each carry phosphoserine.

This sequence belongs to the protein kinase superfamily. Tyr protein kinase family. AXL/UFO subfamily. Monomer and homodimer. Interacts (via N-terminus) with extracellular ligands TULP1 and GAS6. Interacts with PIK3R1; this interaction increases PI3-kinase activity. In terms of processing, autophosphorylated. In terms of tissue distribution, abundant in the brain and lower levels in other tissues.

The protein localises to the cell membrane. The enzyme catalyses L-tyrosyl-[protein] + ATP = O-phospho-L-tyrosyl-[protein] + ADP + H(+). Its function is as follows. Receptor tyrosine kinase that transduces signals from the extracellular matrix into the cytoplasm by binding to several ligands including TULP1 or GAS6. Regulates many physiological processes including cell survival, migration and differentiation. Ligand binding at the cell surface induces dimerization and autophosphorylation of TYRO3 on its intracellular domain that provides docking sites for downstream signaling molecules. Following activation by ligand, interacts with PIK3R1 and thereby enhances PI3-kinase activity. Activates the AKT survival pathway, including nuclear translocation of NF-kappa-B and up-regulation of transcription of NF-kappa-B-regulated genes. TYRO3 signaling plays a role in various processes such as neuron protection from excitotoxic injury, platelet aggregation and cytoskeleton reorganization. Also plays an important role in inhibition of Toll-like receptors (TLRs)-mediated innate immune response by activating STAT1, which selectively induces production of suppressors of cytokine signaling SOCS1 and SOCS3. In terms of biological role, (Microbial infection) Acts as a receptor for lassa virus and lymphocytic choriomeningitis virus, possibly through GAS6 binding to phosphatidyl-serine at the surface of virion envelope. (Microbial infection) Acts as a receptor for Ebolavirus, possibly through GAS6 binding to phosphatidyl-serine at the surface of virion envelope. This Homo sapiens (Human) protein is Tyrosine-protein kinase receptor TYRO3 (TYRO3).